A 464-amino-acid chain; its full sequence is Argininosuccinate lyase (464 aa).

The protein belongs to the lyase 1 family. Argininosuccinate lyase subfamily.

It is found in the cytoplasm. The catalysed reaction is 2-(N(omega)-L-arginino)succinate = fumarate + L-arginine. It participates in amino-acid biosynthesis; L-arginine biosynthesis; L-arginine from L-ornithine and carbamoyl phosphate: step 3/3. This chain is Argininosuccinate lyase, found in Koribacter versatilis (strain Ellin345).